Here is a 999-residue protein sequence, read N- to C-terminus: SYGYDEKSAGGISVPGPMGPSGPRGLPGPPGAPGPQGFQGPPGEPGEPGSGPMGPRGPPGPPGKNGDDGEAGKPGRPGERGPPGPQGARGLPGTAGLPGMKGHRGFSGLDGAKGDAGPAGPKGEPGSPGENGAPGQMGPRGLPGERGRPGASGPAGARGNDGATGAAGPPGPTGPAGPPGFPGAVGAKGEAGPQGARGSEGPQGVRGEPGPPGPAGAAGPAGNPGADGQPGAKGANGAPGIAGAPGFPGARGPSGPQGPSGPPGPKGNSGEPGAPGSKGDTGAKGEPGPTGIQGPPGPAGEEGKRGARGEPGPTGLPGPPGERGGPGSRGFPGADGVAGPKGPAGERGSPGPAGPKGSPGEAGRPGEAGLPGAKGLTGSPGSPGPDGKTGPPGPAGQDGRPGPPGPPGARGQAGVMGFPGPKGAERGVPGPPGAVGPAGKDGEAGAQGPPGPAGPAGERGEQGPAGSPGFQGLPGPAGPPGEAGKPGEQGVPGDLGAPGPSGARGVQGPPGPAGPRGGDAGAPGAPGSQGAPGLQGMPGERGAAGLPGPKGDRGDAGPKGADGAPGKDGVRGLTGPIGPPGPAGAPGDKGESGPSGPAGPTGARGAPGDRGEPGPPGPAGFAGPPGADGQPGAKGEPGDAGAKGDAGPPGPAGPTGPPGPIGNVGAPGPKGARGSAGPPGATGFPGAAGRVGPPGPSGNAGPPGPPGPVGKEGGKGPRGETGPAGRPGEVGPPGPPGPSGEKGSPGADGPAGAPGTPGPQGISGQRGVVGLPGQRGERGFPGLPGPSGEPGKQGPSGSSGERGPPGPVGPPGLAGPPGESGREGSPGAEGSPGRDGSPGPKGDRGETGPGPPGAPGAPGAPGPVGPAGKNGDRGETGPAGPAGPAGPAGARGPAGPQGPRGDKGETGEQGDRGIKGHRGFSGLQGPAGPPGSPGEQGPSGASGPAGPRGPPGSAGSPGKDGLNGLPGPIGPPGPRGRTGDAGPVGPPGPPGPPGPPGPP.

A disordered region spans residues 1 to 999 (SYGYDEKSAG…PGPPGPPGPP (999 aa)). At lysine 7 the chain carries Allysine. Phosphoserine is present on serine 8. 11 positions are modified to 4-hydroxyproline: proline 27, proline 30, proline 33, proline 42, proline 45, proline 48, proline 62, proline 77, proline 83, proline 92, and proline 98. Positions 65–79 (NGDDGEAGKPGRPGE) are enriched in basic and acidic residues. Lysine 101 is subject to 5-hydroxylysine; alternate. Residue lysine 101 is glycosylated (O-linked (Gal...) hydroxylysine; alternate). Phosphoserine is present on serine 107. The segment covering 115–131 (DAGPAGPKGEPGSPGEN) has biased composition (low complexity). 16 positions are modified to 4-hydroxyproline: proline 125, proline 128, proline 134, proline 143, proline 149, proline 170, proline 179, proline 182, proline 209, proline 212, proline 224, proline 230, proline 239, proline 245, proline 248, and proline 263. Over residues 149-167 (PGASGPAGARGNDGATGAA) the composition is skewed to low complexity. Over residues 169–181 (PPGPTGPAGPPGF) the composition is skewed to pro residues. Low complexity predominate over residues 215–254 (AGAAGPAGNPGADGQPGAKGANGAPGIAGAPGFPGARGPS). The residue at position 266 (lysine 266) is a 5-hydroxylysine. 4-hydroxyproline is present on residues proline 272, proline 275, proline 287, proline 296, proline 311, proline 317, proline 326, and proline 332. Residues 321–330 (GERGGPGSRG) are compositionally biased toward gly residues. Lysine 341 is subject to 5-hydroxylysine. 4-hydroxyproline is present on residues proline 350, proline 359, proline 365, proline 371, proline 380, proline 383, proline 392, proline 401, proline 407, proline 419, proline 429, proline 432, proline 450, proline 468, proline 474, proline 480, proline 486, proline 492, proline 498, proline 510, proline 526, proline 532, proline 538, and proline 547. Positions 374 to 400 (KGLTGSPGSPGPDGKTGPPGPAGQDGR) are enriched in low complexity. The segment covering 462 to 489 (QGPAGSPGFQGLPGPAGPPGEAGKPGEQ) has biased composition (low complexity). Residues 522–535 (APGAPGSQGAPGLQ) are compositionally biased toward low complexity. 5-hydroxylysine is present on lysine 559. 4-hydroxyproline occurs at positions 565, 580, and 586. A compositionally biased stretch (low complexity) spans 592–606 (SGPSGPAGPTGARGA). At serine 595 the chain carries Phosphoserine. 4-hydroxyproline occurs at positions 607, 613, 616, 625, 631, 649, 658, and 667. The span at 619 to 646 (AGFAGPPGADGQPGAKGEPGDAGAKGDA) shows a compositional bias: low complexity. Residues 648–660 (PPGPAGPTGPPGP) are compositionally biased toward pro residues. Position 670 is a 5-hydroxylysine (lysine 670). A compositionally biased stretch (low complexity) spans 675–691 (SAGPPGATGFPGAAGRV). A 4-hydroxyproline mark is found at proline 679 and proline 685. Residue proline 693 is modified to 3-hydroxyproline. A 4-hydroxyproline mark is found at proline 694, proline 703, proline 706, proline 727, proline 736, proline 745, proline 754, proline 772, proline 781, proline 784, proline 790, proline 805, proline 811, proline 817, proline 826, and proline 832. Residues 720 to 729 (ETGPAGRPGE) show a composition bias toward low complexity. The span at 739 to 754 (SGEKGSPGADGPAGAP) shows a compositional bias: low complexity. Pro residues predominate over residues 804-814 (PPGPVGPPGLA). Over residues 816–831 (PPGESGREGSPGAEGS) the composition is skewed to low complexity. Lysine 841 carries the 5-hydroxylysine modification. Residues 849 to 864 (PGPPGAPGAPGAPGPV) are compositionally biased toward pro residues. Residues proline 852, proline 855, and proline 858 each carry the 4-hydroxyproline modification. Over residues 885–899 (AGPAGARGPAGPQGP) the composition is skewed to low complexity. The span at 900 to 914 (RGDKGETGEQGDRGI) shows a compositional bias: basic and acidic residues. Lysine 903 is modified (5-hydroxylysine). Residue lysine 915 is modified to 5-hydroxylysine; alternate. O-linked (Gal...) hydroxylysine; alternate glycosylation is present at lysine 915. 4 positions are modified to 4-hydroxyproline: proline 930, proline 933, proline 951, and proline 966. The segment covering 933 to 966 (PGEQGPSGASGPAGPRGPPGSAGSPGKDGLNGLP) has biased composition (low complexity). 3-hydroxyproline is present on proline 971. Residue proline 972 is modified to 4-hydroxyproline. Residues 984–999 (VGPPGPPGPPGPPGPP) show a composition bias toward pro residues. 3-hydroxyproline is present on proline 986. At proline 987 the chain carries 4-hydroxyproline. The residue at position 989 (proline 989) is a 3-hydroxyproline. Proline 990 carries the post-translational modification 4-hydroxyproline. Residue proline 992 is modified to 3-hydroxyproline. Residues proline 993, proline 996, and proline 999 each carry the 4-hydroxyproline modification.

Belongs to the fibrillar collagen family. Trimers of one alpha 2(I) and two alpha 1(I) chains. In terms of processing, contains mostly 4-hydroxyproline. Proline residues at the third position of the tripeptide repeating unit (G-X-Y) are hydroxylated in some or all of the chains. Contains 3-hydroxyproline at a few sites. This modification occurs on the first proline residue in the sequence motif Gly-Pro-Hyp, where Hyp is 4-hydroxyproline. Post-translationally, lysine residues at the third position of the tripeptide repeating unit (G-X-Y) are 5-hydroxylated in some or all of the chains. In terms of processing, O-glycosylated on hydroxylated lysine residues. The O-linked glycan consists of a Glc-Gal disaccharide. Expressed in bones.

Its subcellular location is the secreted. It localises to the extracellular space. The protein localises to the extracellular matrix. In terms of biological role, type I collagen is a member of group I collagen (fibrillar forming collagen). In Choloepus hoffmanni (Hoffmann's two-fingered sloth), this protein is Collagen alpha-1(I) chain.